We begin with the raw amino-acid sequence, 378 residues long: Alginate lyase (378 aa).

The N-terminal stretch at methionine 1 to alanine 28 is a signal peptide. Residues serine 67–lysine 68, histidine 140–threonine 141, and tyrosine 258 each bind substrate. The disordered stretch occupies residues leucine 359–serine 378. Residues aspartate 364–serine 378 are compositionally biased toward basic and acidic residues.

The protein belongs to the polysaccharide lyase 5 family.

The protein resides in the periplasm. The enzyme catalyses Eliminative cleavage of alginate to give oligosaccharides with 4-deoxy-alpha-L-erythro-hex-4-enuronosyl groups at their non-reducing ends and beta-D-mannuronate at their reducing end.. Functionally, catalyzes the depolymerization of alginate by cleaving the beta-1,4 glycosidic bond between two adjacent sugar residues via a beta-elimination mechanism. May serve to degrade mislocalized alginate that is trapped in the periplasmic space. This chain is Alginate lyase, found in Pseudomonas syringae pv. syringae (strain B728a).